A 369-amino-acid chain; its full sequence is 3-isopropylmalate dehydrogenase (369 aa).

Glycine 77 to glutamate 90 is an NAD(+) binding site. Positions 97, 107, 135, and 226 each coordinate substrate. 3 residues coordinate Mg(2+): aspartate 226, aspartate 250, and aspartate 254. Glycine 289–asparagine 301 serves as a coordination point for NAD(+).

This sequence belongs to the isocitrate and isopropylmalate dehydrogenases family. LeuB type 1 subfamily. As to quaternary structure, homodimer. Requires Mg(2+) as cofactor. The cofactor is Mn(2+).

It is found in the cytoplasm. The catalysed reaction is (2R,3S)-3-isopropylmalate + NAD(+) = 4-methyl-2-oxopentanoate + CO2 + NADH. It participates in amino-acid biosynthesis; L-leucine biosynthesis; L-leucine from 3-methyl-2-oxobutanoate: step 3/4. Its function is as follows. Catalyzes the oxidation of 3-carboxy-2-hydroxy-4-methylpentanoate (3-isopropylmalate) to 3-carboxy-4-methyl-2-oxopentanoate. The product decarboxylates to 4-methyl-2 oxopentanoate. The sequence is that of 3-isopropylmalate dehydrogenase from Cereibacter sphaeroides (strain ATCC 17023 / DSM 158 / JCM 6121 / CCUG 31486 / LMG 2827 / NBRC 12203 / NCIMB 8253 / ATH 2.4.1.) (Rhodobacter sphaeroides).